A 229-amino-acid polypeptide reads, in one-letter code: Ribonuclease 3 (229 aa).

Residues 5–127 (LDRLERKLGY…LIGAIYQDAD (123 aa)) form the RNase III domain. Residue glutamate 40 coordinates Mg(2+). The active site involves aspartate 44. Residues aspartate 113 and glutamate 116 each contribute to the Mg(2+) site. The active site involves glutamate 116. Positions 154–224 (DPKTRLQEFL…AAAALIALGV (71 aa)) constitute a DRBM domain.

The protein belongs to the ribonuclease III family. In terms of assembly, homodimer. Mg(2+) is required as a cofactor.

The protein localises to the cytoplasm. The catalysed reaction is Endonucleolytic cleavage to 5'-phosphomonoester.. In terms of biological role, digests double-stranded RNA. Involved in the processing of primary rRNA transcript to yield the immediate precursors to the large and small rRNAs (23S and 16S). Processes some mRNAs, and tRNAs when they are encoded in the rRNA operon. Processes pre-crRNA and tracrRNA of type II CRISPR loci if present in the organism. The polypeptide is Ribonuclease 3 (Pseudomonas entomophila (strain L48)).